The sequence spans 598 residues: Aspartate--tRNA(Asp/Asn) ligase (598 aa).

Position 174 (Glu-174) interacts with L-aspartate. Positions Gln-198 to Lys-201 are aspartate. Arg-220 is a binding site for L-aspartate. ATP contacts are provided by residues Arg-220–Glu-222 and Gln-229. His-458 is an L-aspartate binding site. Glu-492 is a binding site for ATP. Arg-499 contributes to the L-aspartate binding site. Residue Gly-544–Arg-547 coordinates ATP.

It belongs to the class-II aminoacyl-tRNA synthetase family. Type 1 subfamily. In terms of assembly, homodimer.

Its subcellular location is the cytoplasm. The catalysed reaction is tRNA(Asx) + L-aspartate + ATP = L-aspartyl-tRNA(Asx) + AMP + diphosphate. In terms of biological role, aspartyl-tRNA synthetase with relaxed tRNA specificity since it is able to aspartylate not only its cognate tRNA(Asp) but also tRNA(Asn). Reaction proceeds in two steps: L-aspartate is first activated by ATP to form Asp-AMP and then transferred to the acceptor end of tRNA(Asp/Asn). The chain is Aspartate--tRNA(Asp/Asn) ligase from Dehalococcoides mccartyi (strain ATCC BAA-2100 / JCM 16839 / KCTC 5957 / BAV1).